The chain runs to 129 residues: Small ribosomal subunit protein uS8 (129 aa).

This sequence belongs to the universal ribosomal protein uS8 family. As to quaternary structure, part of the 30S ribosomal subunit.

One of the primary rRNA binding proteins, it binds directly to 16S rRNA central domain where it helps coordinate assembly of the platform of the 30S subunit. The sequence is that of Small ribosomal subunit protein uS8 from Methanothrix thermoacetophila (strain DSM 6194 / JCM 14653 / NBRC 101360 / PT) (Methanosaeta thermophila).